Reading from the N-terminus, the 269-residue chain is Glutamate 5-kinase 2 (269 aa).

K16 is an ATP binding site. The substrate site is built by S57, D144, and N156. S218 to K224 contacts ATP.

This sequence belongs to the glutamate 5-kinase family.

It is found in the cytoplasm. The catalysed reaction is L-glutamate + ATP = L-glutamyl 5-phosphate + ADP. Its pathway is amino-acid biosynthesis; L-proline biosynthesis; L-glutamate 5-semialdehyde from L-glutamate: step 1/2. Functionally, catalyzes the transfer of a phosphate group to glutamate to form L-glutamate 5-phosphate. This Rhizobium meliloti (strain 1021) (Ensifer meliloti) protein is Glutamate 5-kinase 2.